A 320-amino-acid polypeptide reads, in one-letter code: Homeobox-leucine zipper protein HOX25 (320 aa).

Positions 79-139 (AAARKRRLTA…NRRARWKTKQ (61 aa)) form a DNA-binding region, homeobox. Residues 138–182 (KQLELDFDRLRAAHDELLAGRTALAADNESLRSQVILLTEKLQAN) form a leucine-zipper region. 2 disordered regions span residues 181–209 (ANGK…KSFQ) and 249–282 (DSPE…PSSS). The segment covering 265–278 (SEDDCGGAGSDDDY) has biased composition (acidic residues).

Belongs to the HD-ZIP homeobox family. Class I subfamily. As to expression, expressed in roots, leaf sheaths and blades and panicles.

Its subcellular location is the nucleus. Functionally, probable transcription factor. The protein is Homeobox-leucine zipper protein HOX25 (HOX25) of Oryza sativa subsp. japonica (Rice).